The following is an 830-amino-acid chain: Isethionate sulfite-lyase (830 aa).

The 670-residue stretch at 31–700 folds into the PFL domain; sequence KRVFKLLERF…VVSATPNGRV (670 aa). 2-hydroxyethane-1-sulfonate is bound by residues Arg189, Gln193, 468-470, and Arg678; that span reads CIE. Cys468 (cysteine radical intermediate) is an active-site residue. The active-site Proton acceptor is the Glu470. Residues 707 to 830 enclose the Glycine radical domain; it reads DGSSPSHGAD…LIARTGHDQM (124 aa). At Gly805 the chain carries Glycine radical.

It belongs to the glycyl radical enzyme (GRE) family. In terms of assembly, homodimer. Post-translationally, requires the activating protein IslB to generate the key active site glycyl radical on Gly-805 that is involved in catalysis.

It catalyses the reaction 2-hydroxyethane-1-sulfonate = acetaldehyde + sulfite + H(+). Its pathway is organosulfur degradation; alkanesulfonate degradation. Functionally, involved in an anaerobic respiration pathway that converts the sulfonate taurine (2-aminoethanesulfonate) to ammonia, acetate and sulfide. Catalyzes the radical-mediated C-S bond cleavage of isethionate (2-hydroxyethanesulfonate) to form sulfite and acetaldehyde. Is not able to use any alternate organosulfonate or (S)-1,2-propanediol or choline as a substrate, showing that this enzyme is highly specific for isethionate. The protein is Isethionate sulfite-lyase of Bilophila wadsworthia (strain 3_1_6).